Here is a 34-residue protein sequence, read N- to C-terminus: Photosystem II reaction center protein Psb30 (34 aa).

A helical transmembrane segment spans residues 5–25 (VLAQLTVLAFVIAVGPITLIW).

This sequence belongs to the Psb30/Ycf12 family. As to quaternary structure, PSII is composed of 1 copy each of membrane proteins PsbA, PsbB, PsbC, PsbD, PsbE, PsbF, PsbH, PsbI, PsbJ, PsbK, PsbL, PsbM, PsbT, PsbX, PsbY, PsbZ, Psb30/Ycf12, peripheral proteins of the oxygen-evolving complex and a large number of cofactors. It forms dimeric complexes.

The protein resides in the plastid. It is found in the chloroplast thylakoid membrane. In terms of biological role, a core subunit of photosystem II (PSII), probably helps stabilize the reaction center. This is Photosystem II reaction center protein Psb30 from Cyanidioschyzon merolae (strain NIES-3377 / 10D) (Unicellular red alga).